Here is a 188-residue protein sequence, read N- to C-terminus: MATYSSNDFRPGLKIMFEGEPYAIESSEFVKPGKGQAFARVKMRRLLTGSRVEKTFKSTDSAEGADVVDTNLNYLYNDGDFYHFMHPETFEQHPVEAKTVGDAAKWLLDNAECIVTLWNGKPIQVLPPNFVELEITDTDPGLKGDTAGTGGKPATLSTGAVVKVPLFVQIGEVIKVDTRSAEYVSRVK.

An N6-(3,6-diaminohexanoyl)-5-hydroxylysine modification is found at K34.

The protein belongs to the elongation factor P family. Post-translationally, may be beta-lysylated on the epsilon-amino group of Lys-34 by the combined action of EpmA and EpmB, and then hydroxylated on the C5 position of the same residue by EpmC (if this protein is present). Lysylation is critical for the stimulatory effect of EF-P on peptide-bond formation. The lysylation moiety may extend toward the peptidyltransferase center and stabilize the terminal 3-CCA end of the tRNA. Hydroxylation of the C5 position on Lys-34 may allow additional potential stabilizing hydrogen-bond interactions with the P-tRNA.

The protein localises to the cytoplasm. It functions in the pathway protein biosynthesis; polypeptide chain elongation. Functionally, involved in peptide bond synthesis. Alleviates ribosome stalling that occurs when 3 or more consecutive Pro residues or the sequence PPG is present in a protein, possibly by augmenting the peptidyl transferase activity of the ribosome. Modification of Lys-34 is required for alleviation. This is Elongation factor P from Erwinia tasmaniensis (strain DSM 17950 / CFBP 7177 / CIP 109463 / NCPPB 4357 / Et1/99).